The sequence spans 189 residues: PTS system glucose-specific EIIA component (189 aa).

The 105-residue stretch at 31-135 (DEAFAEKIVG…SVITPVVIAN (105 aa)) folds into the PTS EIIA type-1 domain. His68 and His83 together coordinate Zn(2+). His83 functions as the Tele-phosphohistidine intermediate; for EIIA activity in the catalytic mechanism. His83 is subject to Phosphohistidine; by HPr.

In terms of assembly, heterodimer with glycerol kinase (glpk). Requires Zn(2+) as cofactor.

The protein resides in the cytoplasm. In terms of biological role, the phosphoenolpyruvate-dependent sugar phosphotransferase system (sugar PTS), a major carbohydrate active transport system, catalyzes the phosphorylation of incoming sugar substrates concomitantly with their translocation across the cell membrane. The enzyme II complex composed of PtsG and Crr is involved in glucose transport. The chain is PTS system glucose-specific EIIA component (crr) from Borreliella burgdorferi (strain ATCC 35210 / DSM 4680 / CIP 102532 / B31) (Borrelia burgdorferi).